Here is a 277-residue protein sequence, read N- to C-terminus: Alpha carbonic anhydrase 5 (277 aa).

A signal peptide spans 1-22; that stretch reads MKIPSIGYVFFLIFISITIVSS. In terms of domain architecture, Alpha-carbonic anhydrase spans 33–269; the sequence is TQFNYEKKGE…KNERPVALYI (237 aa). An intrachain disulfide couples Cys-58 to Cys-219. The N-linked (GlcNAc...) asparagine glycan is linked to Asn-91. Catalysis depends on His-99, which acts as the Proton acceptor. N-linked (GlcNAc...) asparagine glycosylation is present at Asn-117. His-127, His-129, and His-146 together coordinate Zn(2+). 215-216 contributes to the substrate binding site; that stretch reads TT.

It belongs to the alpha-class carbonic anhydrase family. It depends on Zn(2+) as a cofactor. In terms of processing, N-glycosylated.

Its subcellular location is the plastid. It is found in the chloroplast stroma. It catalyses the reaction hydrogencarbonate + H(+) = CO2 + H2O. Reversible hydration of carbon dioxide. The chain is Alpha carbonic anhydrase 5 (ACA5) from Arabidopsis thaliana (Mouse-ear cress).